Consider the following 180-residue polypeptide: Acireductone dioxygenase (180 aa).

Histidine 97, histidine 99, glutamate 103, and histidine 141 together coordinate Fe(2+). Ni(2+) is bound by residues histidine 97, histidine 99, glutamate 103, and histidine 141.

Belongs to the acireductone dioxygenase (ARD) family. Monomer. Requires Fe(2+) as cofactor. Ni(2+) serves as cofactor.

The catalysed reaction is 1,2-dihydroxy-5-(methylsulfanyl)pent-1-en-3-one + O2 = 3-(methylsulfanyl)propanoate + CO + formate + 2 H(+). It catalyses the reaction 1,2-dihydroxy-5-(methylsulfanyl)pent-1-en-3-one + O2 = 4-methylsulfanyl-2-oxobutanoate + formate + 2 H(+). It functions in the pathway amino-acid biosynthesis; L-methionine biosynthesis via salvage pathway; L-methionine from S-methyl-5-thio-alpha-D-ribose 1-phosphate: step 5/6. In terms of biological role, catalyzes 2 different reactions between oxygen and the acireductone 1,2-dihydroxy-3-keto-5-methylthiopentene (DHK-MTPene) depending upon the metal bound in the active site. Fe-containing acireductone dioxygenase (Fe-ARD) produces formate and 2-keto-4-methylthiobutyrate (KMTB), the alpha-ketoacid precursor of methionine in the methionine recycle pathway. Ni-containing acireductone dioxygenase (Ni-ARD) produces methylthiopropionate, carbon monoxide and formate, and does not lie on the methionine recycle pathway. In Serratia proteamaculans (strain 568), this protein is Acireductone dioxygenase.